A 337-amino-acid polypeptide reads, in one-letter code: DNA-directed RNA polymerase subunit alpha (337 aa).

The tract at residues 1-233 (MVREEVVGST…DLFIPFLHAE (233 aa)) is alpha N-terminal domain (alpha-NTD). Residues 265-337 (KEIALKCIFI…FAIDLPKNKF (73 aa)) are alpha C-terminal domain (alpha-CTD).

It belongs to the RNA polymerase alpha chain family. In plastids the minimal PEP RNA polymerase catalytic core is composed of four subunits: alpha, beta, beta', and beta''. When a (nuclear-encoded) sigma factor is associated with the core the holoenzyme is formed, which can initiate transcription.

The protein resides in the plastid. It is found in the chloroplast. It carries out the reaction RNA(n) + a ribonucleoside 5'-triphosphate = RNA(n+1) + diphosphate. DNA-dependent RNA polymerase catalyzes the transcription of DNA into RNA using the four ribonucleoside triphosphates as substrates. This Acorus gramineus (Dwarf sweet flag) protein is DNA-directed RNA polymerase subunit alpha.